The following is a 120-amino-acid chain: MVQRLVYRSRHSYATKSNQHRIVKTPGGKLTYQTTNKRASGPKCPVTGKRIQGIPHLRPAEYKRSRLARNERTVNRAYGGVLSGVAVRERIVRAFLVEEQKIVKKVLKLQKAKEKTAPKS.

Residues 31–50 are disordered; it reads TYQTTNKRASGPKCPVTGKR.

The protein belongs to the eukaryotic ribosomal protein eL34 family.

This is Large ribosomal subunit protein eL34x (RPL34C) from Arabidopsis thaliana (Mouse-ear cress).